A 237-amino-acid chain; its full sequence is Ribosomal RNA small subunit methyltransferase G (237 aa).

S-adenosyl-L-methionine contacts are provided by residues Gly78, Phe83, 129-130, and Arg148; that span reads AE. The disordered stretch occupies residues 218 to 237; the sequence is KKETPNKFPRKAGMPNKRPL.

This sequence belongs to the methyltransferase superfamily. RNA methyltransferase RsmG family.

It localises to the cytoplasm. Its function is as follows. Specifically methylates the N7 position of a guanine in 16S rRNA. In Streptococcus suis (strain 98HAH33), this protein is Ribosomal RNA small subunit methyltransferase G.